Reading from the N-terminus, the 419-residue chain is Peptide chain release factor subunit 1 (419 aa).

This sequence belongs to the eukaryotic release factor 1 family. As to quaternary structure, heterodimer of two subunits, one of which binds GTP.

The protein localises to the cytoplasm. Functionally, directs the termination of nascent peptide synthesis (translation) in response to the termination codons UAA, UAG and UGA. In Methanococcus maripaludis (strain C6 / ATCC BAA-1332), this protein is Peptide chain release factor subunit 1.